The chain runs to 70 residues: DNA gyrase inhibitor YacG (70 aa).

C9, C12, C28, and C32 together coordinate Zn(2+). A disordered region spans residues 44 to 70; it reads SRKIPGSSIDPESIVTTNNKQDNVDEQ.

Belongs to the DNA gyrase inhibitor YacG family. Interacts with GyrB. The cofactor is Zn(2+).

Inhibits all the catalytic activities of DNA gyrase by preventing its interaction with DNA. Acts by binding directly to the C-terminal domain of GyrB, which probably disrupts DNA binding by the gyrase. This is DNA gyrase inhibitor YacG from Legionella pneumophila subsp. pneumophila (strain Philadelphia 1 / ATCC 33152 / DSM 7513).